The chain runs to 270 residues: MKIDVLTIFPEMFTGPMDVSIIGRAREKGILSFNAHDVRAYTTNKHRRVDDTPFGGGAGMVMNAQPFFDALAAILGPRELRDPLRSRVVLLTPQGAVFSQAKARELSGLQQLVLICGRYEGIDDRVRQAWVDEEISIGDYVLTGGELPAMVVIDAVVRLLPGALGDETSAEEESFSDGLLEYPQYTKPALFRGMEAPPELLSGHHAAIRRWRRKEAFKRTYQNRPELLIGRPLPFDDQVLLAEALRELGLDAEIPEKPKKKRAKGREPRT.

Residues glycine 117 and isoleucine 137–leucine 142 contribute to the S-adenosyl-L-methionine site.

It belongs to the RNA methyltransferase TrmD family. In terms of assembly, homodimer.

The protein localises to the cytoplasm. It catalyses the reaction guanosine(37) in tRNA + S-adenosyl-L-methionine = N(1)-methylguanosine(37) in tRNA + S-adenosyl-L-homocysteine + H(+). In terms of biological role, specifically methylates guanosine-37 in various tRNAs. In Heliobacterium modesticaldum (strain ATCC 51547 / Ice1), this protein is tRNA (guanine-N(1)-)-methyltransferase.